A 359-amino-acid polypeptide reads, in one-letter code: Ornithine cyclodeaminase (359 aa).

Residues Arg-53 and Lys-77 each coordinate L-ornithine. NAD(+) is bound by residues Thr-92, Arg-120, 147 to 148, Asp-169, Thr-209, 232 to 235, Lys-239, and Ser-300; these read AQ and VGGD. Residue Arg-120 coordinates L-ornithine. Residue Asp-235 coordinates L-ornithine. The active-site Proton donor/acceptor is Asp-235. Val-301 serves as a coordination point for L-ornithine.

It belongs to the ornithine cyclodeaminase/mu-crystallin family. NAD(+) serves as cofactor.

The enzyme catalyses L-ornithine = L-proline + NH4(+). It functions in the pathway amino-acid biosynthesis; L-proline biosynthesis; L-proline from L-ornithine: step 1/1. Its function is as follows. Catalyzes the conversion of L-ornithine into L-proline with release of ammonia. This chain is Ornithine cyclodeaminase, found in Brucella melitensis biotype 1 (strain ATCC 23456 / CCUG 17765 / NCTC 10094 / 16M).